We begin with the raw amino-acid sequence, 65 residues long: Large ribosomal subunit protein uL29 (65 aa).

This sequence belongs to the universal ribosomal protein uL29 family.

The sequence is that of Large ribosomal subunit protein uL29 from Buchnera aphidicola subsp. Schizaphis graminum (strain Sg).